Here is a 214-residue protein sequence, read N- to C-terminus: Probable nicotinate-nucleotide adenylyltransferase (214 aa).

The protein belongs to the NadD family.

The catalysed reaction is nicotinate beta-D-ribonucleotide + ATP + H(+) = deamido-NAD(+) + diphosphate. It functions in the pathway cofactor biosynthesis; NAD(+) biosynthesis; deamido-NAD(+) from nicotinate D-ribonucleotide: step 1/1. Its function is as follows. Catalyzes the reversible adenylation of nicotinate mononucleotide (NaMN) to nicotinic acid adenine dinucleotide (NaAD). This is Probable nicotinate-nucleotide adenylyltransferase from Rhodopirellula baltica (strain DSM 10527 / NCIMB 13988 / SH1).